A 152-amino-acid chain; its full sequence is Pertussis toxin subunit 4 (152 aa).

The N-terminal stretch at M1–A42 is a signal peptide. 2 disulfide bridges follow: C73–C93 and C145–C151.

In terms of assembly, pertussis toxin contains five different chains, S1-S5. They are organized into 2 functional subunits: A, composed of S1 (which is toxic) and B, containing S2, S3, S5, and two copies of S4 (B binds to the membrane receptors). Dimers of S2-S4 and S3-S4 are held together by S5.

The protein localises to the secreted. It localises to the host cell membrane. In terms of biological role, PTX oligomer B binds to receptors on the eukaryotic cell surface and facilitates the translocation of the toxic subunit across the cell membrane. The polypeptide is Pertussis toxin subunit 4 (ptxD) (Bordetella parapertussis (strain 12822 / ATCC BAA-587 / NCTC 13253)).